The primary structure comprises 222 residues: Exosome complex component Rrp4 (222 aa).

An S1 motif domain is found at 63 to 131; that stretch reads GDLVIGRVTG…EINRVKLTLR (69 aa).

It belongs to the RRP4 family. Component of the archaeal exosome complex. Forms a trimer of Rrp4 and/or Csl4 subunits. The trimer associates with a hexameric ring-like arrangement composed of 3 Rrp41-Rrp42 heterodimers.

The protein localises to the cytoplasm. Non-catalytic component of the exosome, which is a complex involved in RNA degradation. Increases the RNA binding and the efficiency of RNA degradation. Confers strong poly(A) specificity to the exosome. The chain is Exosome complex component Rrp4 from Methanosphaera stadtmanae (strain ATCC 43021 / DSM 3091 / JCM 11832 / MCB-3).